The sequence spans 325 residues: Protein translocase subunit SecF (325 aa).

6 helical membrane passes run 36–56, 148–168, 175–197, 202–224, 254–274, and 281–301; these read GYILSALLMVISLFFIITKGF, LAQGAVYATLATLAMVLIYVG, LGFGSIASLAHDVIITLGVFSAL, DLTFVAAILSVVGYSINDSIVVF, TIITSVTTLVVVMALFFFGGP, and LALLVGIGFGTYSSIFVAIAI.

It belongs to the SecD/SecF family. SecF subfamily. Forms a complex with SecD. Part of the essential Sec protein translocation apparatus which comprises SecA, SecYEG and auxiliary proteins SecDF-YajC and YidC.

The protein localises to the cell inner membrane. Functionally, part of the Sec protein translocase complex. Interacts with the SecYEG preprotein conducting channel. SecDF uses the proton motive force (PMF) to complete protein translocation after the ATP-dependent function of SecA. This chain is Protein translocase subunit SecF, found in Haemophilus influenzae (strain ATCC 51907 / DSM 11121 / KW20 / Rd).